The chain runs to 246 residues: Aspartate/glutamate leucyltransferase (246 aa).

Belongs to the R-transferase family. Bpt subfamily.

It localises to the cytoplasm. It catalyses the reaction N-terminal L-glutamyl-[protein] + L-leucyl-tRNA(Leu) = N-terminal L-leucyl-L-glutamyl-[protein] + tRNA(Leu) + H(+). The enzyme catalyses N-terminal L-aspartyl-[protein] + L-leucyl-tRNA(Leu) = N-terminal L-leucyl-L-aspartyl-[protein] + tRNA(Leu) + H(+). Its function is as follows. Functions in the N-end rule pathway of protein degradation where it conjugates Leu from its aminoacyl-tRNA to the N-termini of proteins containing an N-terminal aspartate or glutamate. The protein is Aspartate/glutamate leucyltransferase of Rhodospirillum rubrum (strain ATCC 11170 / ATH 1.1.1 / DSM 467 / LMG 4362 / NCIMB 8255 / S1).